Here is a 291-residue protein sequence, read N- to C-terminus: Transcription initiation factor IIE subunit beta (291 aa).

An N-acetylmethionine modification is found at Met1. A compositionally biased stretch (basic and acidic residues) spans Met1 to Lys13. Residues Met1–Asn63 are disordered. Over residues Gly50–Phe62 the composition is skewed to polar residues. Ser61 bears the Phosphoserine mark. The segment at residues Ala66–Arg146 is a DNA-binding region (TFIIE beta). An N6-acetyllysine modification is found at Lys74. The segment at Ser243–Thr272 is disordered. The segment covering Gln257 to Lys271 has biased composition (basic residues).

It belongs to the TFIIE beta subunit family. In terms of assembly, tetramer of two alpha and two beta chains. Interacts with FACT subunit SUPT16H. Interacts with ATF7IP. Interacts with SND1. Part of TBP-based Pol II pre-initiation complex (PIC), in which Pol II core assembles with general transcription factors and other specific initiation factors including GTF2E1, GTF2E2, GTF2F1, GTF2F2, TCEA1, ERCC2, ERCC3, GTF2H2, GTF2H3, GTF2H4, GTF2H5, GTF2A1, GTF2A2, GTF2B and TBP; this large multi-subunit PIC complex mediates DNA unwinding and targets Pol II core to the transcription start site where the first phosphodiester bond forms.

It is found in the nucleus. Its function is as follows. Recruits TFIIH to the initiation complex and stimulates the RNA polymerase II C-terminal domain kinase and DNA-dependent ATPase activities of TFIIH. Both TFIIH and TFIIE are required for promoter clearance by RNA polymerase. This chain is Transcription initiation factor IIE subunit beta (GTF2E2), found in Homo sapiens (Human).